A 311-amino-acid chain; its full sequence is Methionyl-tRNA formyltransferase (311 aa).

A disordered region spans residues 33–52; that stretch reads RPDRPAGRGRHQRSSPVREL. 110–113 serves as a coordination point for (6S)-5,6,7,8-tetrahydrofolate; it reads SLLP.

The protein belongs to the Fmt family.

The catalysed reaction is L-methionyl-tRNA(fMet) + (6R)-10-formyltetrahydrofolate = N-formyl-L-methionyl-tRNA(fMet) + (6S)-5,6,7,8-tetrahydrofolate + H(+). Attaches a formyl group to the free amino group of methionyl-tRNA(fMet). The formyl group appears to play a dual role in the initiator identity of N-formylmethionyl-tRNA by promoting its recognition by IF2 and preventing the misappropriation of this tRNA by the elongation apparatus. In Parafrankia sp. (strain EAN1pec), this protein is Methionyl-tRNA formyltransferase.